The following is a 177-amino-acid chain: Mitochondrial inner membrane protease subunit 2 (177 aa).

Active-site residues include S41 and K91. Residues 134 to 152 (TFGPISSGLVIGKAITIVW) form a helical membrane-spanning segment.

It belongs to the peptidase S26 family. IMP2 subfamily. In terms of assembly, component of the mitochondrial inner membrane peptidase (IMP) complex which at least consists of IMP1, IMP2 and SOM1. In terms of processing, the N-terminus is blocked.

The protein resides in the mitochondrion inner membrane. Its function is as follows. Catalytic component of the mitochondrial inner membrane peptidase (IMP) complex. IMP catalyzes the removal of signal peptides required for the targeting of proteins from the mitochondrial matrix, across the inner membrane, into the inter-membrane space. The two catalytic IMP subunits seem to have non-overlapping substrate specificities. IMP2 substrates include nuclear encoded CYB2, mitochondrially encoded COX2 and cytochrome c1. Required for the stability of IMP1. The sequence is that of Mitochondrial inner membrane protease subunit 2 (IMP2) from Saccharomyces cerevisiae (strain ATCC 204508 / S288c) (Baker's yeast).